We begin with the raw amino-acid sequence, 261 residues long: Potassium/proton antiporter CemA (261 aa).

The next 3 membrane-spanning stretches (helical) occupy residues 138-158 (IISH…CLIL), 186-206 (ILLV…ELMI), and 221-241 (IISG…KYWI).

This sequence belongs to the CemA family.

Its subcellular location is the plastid. The protein resides in the chloroplast inner membrane. The catalysed reaction is K(+)(in) + H(+)(out) = K(+)(out) + H(+)(in). In terms of biological role, contributes to K(+)/H(+) antiport activity by supporting proton efflux to control proton extrusion and homeostasis in chloroplasts in a light-dependent manner to modulate photosynthesis. Prevents excessive induction of non-photochemical quenching (NPQ) under continuous-light conditions. Indirectly promotes efficient inorganic carbon uptake into chloroplasts. This chain is Potassium/proton antiporter CemA, found in Cryptomeria japonica (Japanese cedar).